We begin with the raw amino-acid sequence, 1224 residues long: Coatomer subunit alpha (1224 aa).

WD repeat units follow at residues 3-38 (TKFETKSARVKGLSFHPKRPWILTSLHNGVIQLWDY), 42-80 (TLIDKFDEHDGPVRGIDFHKQQPLFVSGGDDYKIKVWNY), 84-122 (RCLFTLLGHLDYIRTTFFHHEYPWILSASDDQTIRVWNW), and 126-164 (TCVCVLTGHNHYVMCAQFHPTEDLVVSASLDQTVRVWDI). A Phosphoserine modification is found at serine 173. A Phosphothreonine modification is found at threonine 185. 3 WD repeats span residues 195-234 (AVVKHVLEGHDRGVNWAAFHPTMPLIVSGADDRQVKIWRM), 241-278 (EVDTCRGHYNNVSCAVFHPRQELILSNSEDKSIRVWDM), and 282-319 (TGVQTFRRDHDRFWVLAAHPNLNLFAAGHDGGMIVFKL). Serine 402 is modified (phosphoserine). Residue threonine 591 is modified to Phosphothreonine. The residue at position 895 (serine 895) is a Phosphoserine. Arginine 965 carries the post-translational modification Omega-N-methylarginine. Serine 1193 bears the Phosphoserine mark.

Oligomeric complex that consists of at least the alpha, beta, beta', gamma, delta, epsilon and zeta subunits. Interacts with SCYL1. Interacts with JAGN1. Interacts with TMEM41B. Interacts with SVEP1. Probably interacts with PEX11A. Uniformly expressed in a wide range of adult and fetal tissues. Xenin is found in gastric, duodenal and jejunal mucosa. Circulates in the blood. Seems to be confined to specific endocrine cells.

It localises to the cytoplasm. It is found in the golgi apparatus membrane. The protein resides in the cytoplasmic vesicle. The protein localises to the COPI-coated vesicle membrane. Its subcellular location is the secreted. Its function is as follows. The coatomer is a cytosolic protein complex that binds to dilysine motifs and reversibly associates with Golgi non-clathrin-coated vesicles, which further mediate biosynthetic protein transport from the ER, via the Golgi up to the trans Golgi network. Coatomer complex is required for budding from Golgi membranes, and is essential for the retrograde Golgi-to-ER transport of dilysine-tagged proteins. In mammals, the coatomer can only be recruited by membranes associated to ADP-ribosylation factors (ARFs), which are small GTP-binding proteins; the complex also influences the Golgi structural integrity, as well as the processing, activity, and endocytic recycling of LDL receptors. Functionally, xenin stimulates exocrine pancreatic secretion. It inhibits pentagastrin-stimulated secretion of acid, to induce exocrine pancreatic secretion and to affect small and large intestinal motility. In the gut, xenin interacts with the neurotensin receptor. The chain is Coatomer subunit alpha (COPA) from Homo sapiens (Human).